Consider the following 100-residue polypeptide: MRGETGVSIKNPRPSRPFSCFWRKGDVENIRKSDIGNEKKIDAKFNRLQYNLYYKPLSHHKAGLLYKELFFRSCFSYTTCSLDFQGKRHQVERKAVDIVL.

May interact with ribosomes.

This is an uncharacterized protein from Saccharomyces cerevisiae (strain ATCC 204508 / S288c) (Baker's yeast).